Reading from the N-terminus, the 181-residue chain is Peptidyl-tRNA hydrolase (181 aa).

Residue Tyr-14 participates in tRNA binding. His-19 (proton acceptor) is an active-site residue. 3 residues coordinate tRNA: Phe-60, Asn-62, and Asn-106.

The protein belongs to the PTH family. In terms of assembly, monomer.

The protein resides in the cytoplasm. It catalyses the reaction an N-acyl-L-alpha-aminoacyl-tRNA + H2O = an N-acyl-L-amino acid + a tRNA + H(+). Functionally, hydrolyzes ribosome-free peptidyl-tRNAs (with 1 or more amino acids incorporated), which drop off the ribosome during protein synthesis, or as a result of ribosome stalling. Its function is as follows. Catalyzes the release of premature peptidyl moieties from peptidyl-tRNA molecules trapped in stalled 50S ribosomal subunits, and thus maintains levels of free tRNAs and 50S ribosomes. The sequence is that of Peptidyl-tRNA hydrolase from Campylobacter curvus (strain 525.92).